We begin with the raw amino-acid sequence, 223 residues long: Dephospho-CoA kinase (223 aa).

Residues Leu-22 to Phe-223 form the DPCK domain. Cys-30 to Thr-35 is an ATP binding site.

It belongs to the CoaE family.

The protein localises to the cytoplasm. The enzyme catalyses 3'-dephospho-CoA + ATP = ADP + CoA + H(+). Its pathway is cofactor biosynthesis; coenzyme A biosynthesis; CoA from (R)-pantothenate: step 5/5. In terms of biological role, catalyzes the phosphorylation of the 3'-hydroxyl group of dephosphocoenzyme A to form coenzyme A. The polypeptide is Dephospho-CoA kinase (Treponema denticola (strain ATCC 35405 / DSM 14222 / CIP 103919 / JCM 8153 / KCTC 15104)).